Here is a 337-residue protein sequence, read N- to C-terminus: Alcohol dehydrogenase 1 (337 aa).

Residues Cys-37, His-58, Cys-89, Cys-92, Cys-95, Cys-103, and Cys-145 each contribute to the Zn(2+) site.

This sequence belongs to the zinc-containing alcohol dehydrogenase family. As to quaternary structure, multimeric (with different ratios of monomers). Zn(2+) serves as cofactor.

The enzyme catalyses a primary alcohol + NAD(+) = an aldehyde + NADH + H(+). It catalyses the reaction a secondary alcohol + NAD(+) = a ketone + NADH + H(+). It participates in alcohol metabolism; ethanol biosynthesis via fermentation pathway. Inhibited by ethanol. The sequence is that of Alcohol dehydrogenase 1 (adhA) from Zymomonas mobilis subsp. mobilis (strain ATCC 31821 / ZM4 / CP4).